Consider the following 446-residue polypeptide: T-box transcription factor TBX20 (446 aa).

The interval 50-80 (SCHPNLGDLPPLETHSDFSSGGGTGSGAPLC) is disordered. Residues 108-287 (LWDKFHELGT…SNPFAKGFRD (180 aa)) constitute a DNA-binding region (T-box).

The protein localises to the nucleus. In terms of biological role, transcriptional regulator that may play a very early role in the differentiation of the cardiac precursors. This chain is T-box transcription factor TBX20 (tbx20), found in Danio rerio (Zebrafish).